The primary structure comprises 984 residues: Protein translocase subunit SecA (984 aa).

ATP-binding positions include Gln96, 114–118 (GEGKT), and Asp595. Composition is skewed to basic and acidic residues over residues 930–942 (EHEE…RLLE) and 952–971 (KSDK…EERL). The interval 930–984 (EHEEEKKHQRLLEEAELQGVQGKSDKKPRPKTLKERLKEERLRKRKLKAKKKEQE) is disordered. Basic residues predominate over residues 972-984 (RKRKLKAKKKEQE).

This sequence belongs to the SecA family. Monomer and homodimer. Part of the essential Sec protein translocation apparatus which comprises SecA, SecYEG and auxiliary proteins SecDF. Other proteins may also be involved.

Its subcellular location is the cell inner membrane. The protein localises to the cytoplasm. The catalysed reaction is ATP + H2O + cellular proteinSide 1 = ADP + phosphate + cellular proteinSide 2.. Its function is as follows. Part of the Sec protein translocase complex. Interacts with the SecYEG preprotein conducting channel. Has a central role in coupling the hydrolysis of ATP to the transfer of proteins into and across the cell membrane, serving as an ATP-driven molecular motor driving the stepwise translocation of polypeptide chains across the membrane. In Aquifex aeolicus (strain VF5), this protein is Protein translocase subunit SecA.